Consider the following 89-residue polypeptide: Sodium channel toxin To13 (89 aa).

Residues 1–18 (MKTLFLIITSFILLEVEG) form the signal peptide. In terms of domain architecture, LCN-type CS-alpha/beta spans 20–87 (KNGYPRDSKG…TWKNKEPKCK (68 aa)). 4 disulfide bridges follow: cysteine 30–cysteine 86, cysteine 34–cysteine 60, cysteine 45–cysteine 67, and cysteine 49–cysteine 69.

Belongs to the long (4 C-C) scorpion toxin superfamily. Sodium channel inhibitor family. Expressed by the venom gland.

Its subcellular location is the secreted. Inhibits voltage-gated sodium channels (Nav). This chain is Sodium channel toxin To13, found in Tityus obscurus (Amazonian scorpion).